The following is a 257-amino-acid chain: UPF0246 protein RHOS4_29700 (257 aa).

The protein belongs to the UPF0246 family.

The sequence is that of UPF0246 protein RHOS4_29700 from Cereibacter sphaeroides (strain ATCC 17023 / DSM 158 / JCM 6121 / CCUG 31486 / LMG 2827 / NBRC 12203 / NCIMB 8253 / ATH 2.4.1.) (Rhodobacter sphaeroides).